We begin with the raw amino-acid sequence, 197 residues long: MEISAQMVKELRERTGAGMMDCKNALAEANGDFEKAIEILRKKGLAKAAKKAGRETKEGLIISYVHHNGKIGVLLELNCETDFVARTDDFKELGNKIAMHIAAMSPRWVTREEVPADVIEKEKEIYREQLKDSGKPAQVIEKIIEGKLESFYQDNCLLEQKFALDQNVTIKDMIQQAIAKIGENIQVSRFVRMQIGE.

Residues 81 to 84 (TDFV) form an involved in Mg(2+) ion dislocation from EF-Tu region.

This sequence belongs to the EF-Ts family.

The protein resides in the cytoplasm. Its function is as follows. Associates with the EF-Tu.GDP complex and induces the exchange of GDP to GTP. It remains bound to the aminoacyl-tRNA.EF-Tu.GTP complex up to the GTP hydrolysis stage on the ribosome. The polypeptide is Elongation factor Ts (Fervidobacterium nodosum (strain ATCC 35602 / DSM 5306 / Rt17-B1)).